Reading from the N-terminus, the 383-residue chain is Fructose-1,6-bisphosphate aldolase/phosphatase (383 aa).

Residue Asp11 is the Proton acceptor; for FBP phosphatase activity of the active site. Asp11, His18, Asp52, and Asp53 together coordinate Mg(2+). His18 lines the beta-D-fructose 1,6-bisphosphate pocket. Residue His18 coordinates dihydroxyacetone phosphate. Tyr90 contacts beta-D-fructose 1,6-bisphosphate. Residue Gln94 coordinates Mg(2+). Gly103–Asn104 lines the beta-D-fructose 1,6-bisphosphate pocket. Asp131 is a binding site for Mg(2+). Residue Lys132 coordinates beta-D-fructose 1,6-bisphosphate. Lys132 provides a ligand contact to dihydroxyacetone phosphate. The active-site Proton donor/acceptor; for FBP aldolase activity is the Tyr228. Residues Lys231, Asp232, and Asp233 each contribute to the Mg(2+) site. The active-site Schiff-base intermediate with DHAP; for FBP aldolase activity is the Lys231. Residues Gln241–His242, Arg265, Asp286, and Tyr347 contribute to the beta-D-fructose 1,6-bisphosphate site. 2 residues coordinate dihydroxyacetone phosphate: Arg265 and Asp286. Positions Phe361–Asp383 are disordered. Over residues Val374–Asp383 the composition is skewed to polar residues.

Belongs to the FBP aldolase/phosphatase family. As to quaternary structure, homooctamer; dimer of tetramers. Requires Mg(2+) as cofactor.

It carries out the reaction beta-D-fructose 1,6-bisphosphate + H2O = beta-D-fructose 6-phosphate + phosphate. The catalysed reaction is beta-D-fructose 1,6-bisphosphate = D-glyceraldehyde 3-phosphate + dihydroxyacetone phosphate. It functions in the pathway carbohydrate biosynthesis; gluconeogenesis. Functionally, catalyzes two subsequent steps in gluconeogenesis: the aldol condensation of dihydroxyacetone phosphate (DHAP) and glyceraldehyde-3-phosphate (GA3P) to fructose-1,6-bisphosphate (FBP), and the dephosphorylation of FBP to fructose-6-phosphate (F6P). The sequence is that of Fructose-1,6-bisphosphate aldolase/phosphatase from Metallosphaera sedula (strain ATCC 51363 / DSM 5348 / JCM 9185 / NBRC 15509 / TH2).